Here is a 452-residue protein sequence, read N- to C-terminus: Mitochondrial distribution and morphology protein 34 (452 aa).

The SMP-LTD domain maps to 1-196 (MSFRVKGWSD…LPSIIYKMSR (196 aa)).

Belongs to the MDM34 family. Component of the ER-mitochondria encounter structure (ERMES) or MDM complex, composed of mmm1, mdm10, mdm12 and mdm34.

It is found in the mitochondrion outer membrane. Component of the ERMES/MDM complex, which serves as a molecular tether to connect the endoplasmic reticulum (ER) and mitochondria. Components of this complex are involved in the control of mitochondrial shape and protein biogenesis, and function in nonvesicular lipid trafficking between the ER and mitochondria. Mdm34 is required for the interaction of the ER-resident membrane protein mmm1 and the outer mitochondrial membrane-resident beta-barrel protein mdm10. The chain is Mitochondrial distribution and morphology protein 34 from Schizosaccharomyces pombe (strain 972 / ATCC 24843) (Fission yeast).